The chain runs to 702 residues: Ribosomal RNA large subunit methyltransferase K/L (702 aa).

One can recognise a THUMP domain in the interval 43-154 (LIYQSLMWSR…KETASIALDL (112 aa)).

Belongs to the methyltransferase superfamily. RlmKL family.

The protein localises to the cytoplasm. It carries out the reaction guanosine(2445) in 23S rRNA + S-adenosyl-L-methionine = N(2)-methylguanosine(2445) in 23S rRNA + S-adenosyl-L-homocysteine + H(+). The catalysed reaction is guanosine(2069) in 23S rRNA + S-adenosyl-L-methionine = N(2)-methylguanosine(2069) in 23S rRNA + S-adenosyl-L-homocysteine + H(+). Its function is as follows. Specifically methylates the guanine in position 2445 (m2G2445) and the guanine in position 2069 (m7G2069) of 23S rRNA. The polypeptide is Ribosomal RNA large subunit methyltransferase K/L (Salmonella choleraesuis (strain SC-B67)).